Here is a 384-residue protein sequence, read N- to C-terminus: Probable protein phosphatase 2C 42 (384 aa).

One can recognise a PPM-type phosphatase domain in the interval 58 to 358 (DFSMAVIQAN…DDITVIVVFL (301 aa)). Mn(2+) contacts are provided by aspartate 89, glycine 90, aspartate 290, and aspartate 349.

The protein belongs to the PP2C family. It depends on Mg(2+) as a cofactor. Mn(2+) serves as cofactor.

The enzyme catalyses O-phospho-L-seryl-[protein] + H2O = L-seryl-[protein] + phosphate. The catalysed reaction is O-phospho-L-threonyl-[protein] + H2O = L-threonyl-[protein] + phosphate. Functionally, dephosphorylates and represses plasma membrane H(+)-ATPases (PM H(+)-ATPases, e.g. AHA1 and AHA2), thus influencing negatively plant growth and fitness. Promotes the apical hook maintenance of etiolated seedlings. The polypeptide is Probable protein phosphatase 2C 42 (Arabidopsis thaliana (Mouse-ear cress)).